Reading from the N-terminus, the 240-residue chain is 2,3,4,5-tetrahydropyridine-2,6-dicarboxylate N-acetyltransferase (240 aa).

This sequence belongs to the transferase hexapeptide repeat family. DapH subfamily.

It catalyses the reaction (S)-2,3,4,5-tetrahydrodipicolinate + acetyl-CoA + H2O = L-2-acetamido-6-oxoheptanedioate + CoA. Its pathway is amino-acid biosynthesis; L-lysine biosynthesis via DAP pathway; LL-2,6-diaminopimelate from (S)-tetrahydrodipicolinate (acetylase route): step 1/3. In terms of biological role, catalyzes the transfer of an acetyl group from acetyl-CoA to tetrahydrodipicolinate. This chain is 2,3,4,5-tetrahydropyridine-2,6-dicarboxylate N-acetyltransferase, found in Bacillus cereus (strain G9842).